We begin with the raw amino-acid sequence, 328 residues long: uncharacterized protein (328 aa).

This is an uncharacterized protein from Schizosaccharomyces pombe (strain 972 / ATCC 24843) (Fission yeast).